A 444-amino-acid chain; its full sequence is Tol-Pal system protein TolB (444 aa).

An N-terminal signal peptide occupies residues 1–19; it reads MRNIIYFILSLLFSFASYA.

The protein belongs to the TolB family. The Tol-Pal system is composed of five core proteins: the inner membrane proteins TolA, TolQ and TolR, the periplasmic protein TolB and the outer membrane protein Pal. They form a network linking the inner and outer membranes and the peptidoglycan layer.

The protein localises to the periplasm. In terms of biological role, part of the Tol-Pal system, which plays a role in outer membrane invagination during cell division and is important for maintaining outer membrane integrity. The sequence is that of Tol-Pal system protein TolB from Rickettsia massiliae (strain Mtu5).